A 1229-amino-acid chain; its full sequence is Alpha,alpha-trehalose-phosphate synthase [UDP-forming] 2 (1229 aa).

Residues 196–233 are disordered; it reads VSSDSEGEEAIHNVRSGTHTESESEEDPKAPRSGLATS. A compositionally biased stretch (basic and acidic residues) spans 213–225; the sequence is THTESESEEDPKA.

The protein in the N-terminal section; belongs to the glycosyltransferase 20 family. In the C-terminal section; belongs to the gob-1 trehalose phosphatase family.

The catalysed reaction is D-glucose 6-phosphate + UDP-alpha-D-glucose = alpha,alpha-trehalose 6-phosphate + UDP + H(+). Catalyzes the production of trehalose from glucose-6-phosphate and UDP-alpha-D-glucose in a 2 step process. The sequence is that of Alpha,alpha-trehalose-phosphate synthase [UDP-forming] 2 (tps-2) from Caenorhabditis elegans.